Here is an 809-residue protein sequence, read N- to C-terminus: MVAAKENKFLTVAPFECAWSDDLKFREAGRGCVAFDAFAHNDVTVVFRENVGTQHYHYKKDNSPHYIVIIGSNRNRRLKIQVDGKSVVDEEASDLCRCSLEFQSYWISIYDGLISIGKGRYPFQNLVFKWQDPKPNCNVQYVGLSSWDKHVGYRNVSVFPVTHNHILLWKQVDCREVRGDESGDEKVVEEGTGYDYEQWGLGNFLESWQLSDTVFLVGEEEMDVPAHKVILQASGNFPLRSSDGDVIQLRGVSYPILHALLQYIYTGRTQILESELAPLRDLSSKFEVMSLVRQCEESIDHFKLSKTAFDSCRKVKLLCPISHPLSGFMFPSAFPVDVGKLVKLYSTGEYSDIKIYLSDHSLTFQSHKVILSLWSVAFAKMFTNGMSESHSSTIYLTDVSPEAFKAMMNFMYSGELNMEDTVNFGTELIHLLFLADRFGVVPLHQECCKMLLECLSEDSVCSVLQVVSSISSCKLIEEMCKRKFSMHFDYCTTASLDFVLLDQTTFSDILESADLTVTSEEKILNAVLMWCMKAEESHSWGVIDEMMNYADPKSLFKERLQSLDDLLPHVRFSLLPYELLKRLENSNLSKEIPVFNRLLKEAASFLTSGLISPGNEPISRFQHRRSSFKELQYIRDGDSNGVLHFVGTSYGSHQWVNPVLAKKINITSSSPTSRFTDPKALASKAYAGTSFAGPRMEDGHISSWWVVDLGEEHQLMCNYYTFRQDGSRAFTRFWKFQGSMDGKTWTDLRVHEDDQTMCKAGQFASWPITAANALLPFRFFRLVLTGPTADTSTPWNFCICYLELYGYFR.

2 consecutive BTB domains span residues 211-273 (SDTV…QILE) and 351-420 (SDIK…NMED). Positions 466-537 (VVSSISSCKL…LMWCMKAEES (72 aa)) constitute a BACK domain.

Its pathway is protein modification; protein ubiquitination. In terms of biological role, may act as a substrate-specific adapter of an E3 ubiquitin-protein ligase complex (CUL3-RBX1-BTB) which mediates the ubiquitination and subsequent proteasomal degradation of target proteins. The protein is BTB/POZ domain-containing protein At2g30600 of Arabidopsis thaliana (Mouse-ear cress).